A 138-amino-acid chain; its full sequence is Small ribosomal subunit protein uS11c (138 aa).

The protein belongs to the universal ribosomal protein uS11 family. Part of the 30S ribosomal subunit.

The protein localises to the plastid. The sequence is that of Small ribosomal subunit protein uS11c from Cuscuta obtusiflora (Peruvian dodder).